The sequence spans 240 residues: uncharacterized protein (240 aa).

A disordered region spans residues 216 to 240 (MKQSKNKPRIRQAVGATRQCRKPQA).

This is an uncharacterized protein from Escherichia coli (strain K12).